We begin with the raw amino-acid sequence, 241 residues long: 1-(5-phosphoribosyl)-5-[(5-phosphoribosylamino)methylideneamino] imidazole-4-carboxamide isomerase (241 aa).

Catalysis depends on Asp8, which acts as the Proton acceptor. The active-site Proton donor is the Asp130.

This sequence belongs to the HisA/HisF family.

The protein localises to the cytoplasm. It carries out the reaction 1-(5-phospho-beta-D-ribosyl)-5-[(5-phospho-beta-D-ribosylamino)methylideneamino]imidazole-4-carboxamide = 5-[(5-phospho-1-deoxy-D-ribulos-1-ylimino)methylamino]-1-(5-phospho-beta-D-ribosyl)imidazole-4-carboxamide. The protein operates within amino-acid biosynthesis; L-histidine biosynthesis; L-histidine from 5-phospho-alpha-D-ribose 1-diphosphate: step 4/9. In Leptospira borgpetersenii serovar Hardjo-bovis (strain JB197), this protein is 1-(5-phosphoribosyl)-5-[(5-phosphoribosylamino)methylideneamino] imidazole-4-carboxamide isomerase.